The following is a 22-amino-acid chain: KRNGCCNCSSKWCRDHSRCCGR.

Positions 1–2 (KR) are excised as a propeptide. Cystine bridges form between Cys-5–Cys-13, Cys-5–Cys-19, Cys-5–Cys-20, Cys-6–Cys-13, Cys-6–Cys-19, Cys-8–Cys-19, and Cys-8–Cys-20. Pharmacophore key residues regions lie at residues 14 to 16 (RDH) and 18 to 19 (RC). Cys-20 is modified (cysteine amide).

This sequence belongs to the conotoxin M superfamily. As to quaternary structure, monomer. Post-translationally, toxins with three different disulfide connectivities have been synthesized. The conotoxin mu-KIIIA-P1 shows the connectivity C1-C5, C2-C4, and C3-C6, whereas mu-KIIIA-P2 shows the connectivity C1-C6, C2-C4, and C3-C5. The conotoxin mu-KIIIA-N has the 'native' fold of the mu-conotoxin family (C1-C4, C2-C5, and C3-C6). Mu-KIIIA-P1 and mu-KIIIA-P2 are obtained by both thermodynamic oxidative folding and regioselective synthesis. Mu-KIIIA-P1 is the major oxidative folding product. Mu-KIIIA-N is only obtained by regioselective synthesis. Expressed by the venom duct.

It is found in the secreted. Mu-conotoxin KIIIA-P1: mu-conotoxins block voltage-gated sodium channels (Nav). This toxin potently blocks Nav1.2/SCN2A (IC(50)5-124 nM), Nav1.4/SCN4A (IC(50)=20-90 nM), and Nav1.7/SCN9A (IC(50)=290-413 nM). It moderately blocks Nav1.1/SCN1A, and mNav1.6/SCN8A. It also shows a very low activity on Nav1.3/SCN3A. This toxin binds a microsite within the pore different from the tetrodotoxin binding site 1 (tested on Nav1.2). The block is partial, with a residual current that can be completely blocked by TTX. The toxin probably docks at a more superficial site in the outer vestibule of the channel than does TTX. On rNav1.2/SCN2A, it produces a block that is only partially reversible. The block of Nav1.7 is modified when beta-subunits are coexpressed with the alpha subunit. Hence, blocks of channels containing beta-1 and beta-3 subunits are more potent (compared to channels without beta subunits), whereas blocks of channels containing beta-2 and beta-4 subunits are less potent (compared to channels without beta subunits). Functionally, mu-conotoxin KIIIA-P2: This toxin potently blocks Nav1.2/SCN2A (Kd=230 nM, IC(50)=1.37 uM) and Nav1.4/SCN4A (Kd=830 nM, IC(50)=2 uM). It also moderately blocks Nav1.7/SCN9A (Kd=1.57 uM, IC(50)=5.4 uM). In addition, this toxin may also inhibit other sodium channels, as does Mu-conotoxin KIIIA-P1. In terms of biological role, mu-conotoxin KIIIA-N: This toxin moderately blocks Nav1.2/SCN2A (IC(50)=875 nM), Nav1.4/SCN4A (IC(50)=472 nM), and Nav1.7/SCN9A (IC(50)=887 nM). Its function is as follows. Mu-conotoxin KIIIB-P1: This toxin potently blocks Nav1.2/SCN2A (Kd=470 nM). In addition, this toxin may also inhibit other sodium channels, as does Mu-conotoxin KIIIA-P1. Mu-conotoxin KIIIB-P2: This toxin potently blocks Nav1.2/SCN2A (Kd=26 nM). In addition, this toxin may also inhibit other sodium channels, as does Mu-conotoxin KIIIA-P1. This is Mu-conotoxin KIIIB from Conus kinoshitai (Kinoshita's cone).